The following is a 574-amino-acid chain: Interleukin-1 receptor-like 2 (574 aa).

Residues 1 to 21 (MGVTSLLFCGVFFLLLLFVAA) form the signal peptide. Residues 22–338 (DTCEDIFMHN…ILIYPVPDFR (317 aa)) lie on the Extracellular side of the membrane. Ig-like C2-type domains are found at residues 25 to 113 (EDIF…VNLT), 132 to 215 (PDVY…IRNY), and 225 to 321 (YGRR…TCHA). N-linked (GlcNAc...) asparagine glycans are attached at residues asparagine 43, asparagine 55, and asparagine 111. Cysteine 44 and cysteine 97 are oxidised to a cystine. A disulfide bond links cysteine 149 and cysteine 199. 6 N-linked (GlcNAc...) asparagine glycosylation sites follow: asparagine 231, asparagine 237, asparagine 253, asparagine 269, asparagine 290, and asparagine 302. Residues cysteine 252 and cysteine 319 are joined by a disulfide bond. The helical transmembrane segment at 339-359 (AYLLGGLMAFLLLVVSVLFIY) threads the bilayer. Over 360-574 (NSFKIDIMLW…CNAATGLITP (215 aa)) the chain is Cytoplasmic. A TIR domain is found at 384–539 (KLYDAYVLYP…KFWKKVRYHM (156 aa)). Glutamate 470 is an active-site residue.

The protein belongs to the interleukin-1 receptor family. Interacts with IL1RAP; the association is enhanced by IL36B indicative for an functional signaling complex and inhibited by IL36RN. As to expression, expressed in bone marrow-derived dendritic cells, splenic CD4(+) T-cells, bone marrow-derived macrophages and bone marrow-derived neutrophils.

The protein localises to the membrane. The catalysed reaction is NAD(+) + H2O = ADP-D-ribose + nicotinamide + H(+). In terms of biological role, receptor for interleukin-36 (IL36A, IL36B and IL36G). After binding to interleukin-36 associates with the coreceptor IL1RAP to form the interleukin-36 receptor complex which mediates interleukin-36-dependent activation of NF-kappa-B, MAPK and other pathways. The IL-36 signaling system is thought to be present in epithelial barriers and to take part in local inflammatory response; it is similar to the IL-1 system. Seems to be involved in skin inflammatory response by induction of the IL-23/IL-17/IL-22 pathway. In Mus musculus (Mouse), this protein is Interleukin-1 receptor-like 2 (Il1rl2).